Here is a 185-residue protein sequence, read N- to C-terminus: Large ribosomal subunit protein uL5 (185 aa).

The protein belongs to the universal ribosomal protein uL5 family. In terms of assembly, part of the 50S ribosomal subunit; part of the 5S rRNA/L5/L18/L25 subcomplex. Contacts the 5S rRNA and the P site tRNA. Forms a bridge to the 30S subunit in the 70S ribosome.

This is one of the proteins that bind and probably mediate the attachment of the 5S RNA into the large ribosomal subunit, where it forms part of the central protuberance. In the 70S ribosome it contacts protein S13 of the 30S subunit (bridge B1b), connecting the 2 subunits; this bridge is implicated in subunit movement. Contacts the P site tRNA; the 5S rRNA and some of its associated proteins might help stabilize positioning of ribosome-bound tRNAs. In Brucella abortus (strain S19), this protein is Large ribosomal subunit protein uL5.